Here is a 131-residue protein sequence, read N- to C-terminus: uncharacterized protein (131 aa).

The interval 112–131 (LTDNPGAVRKSQKSLIPPYN) is disordered.

This is an uncharacterized protein from Fowl adenovirus A serotype 1 (strain CELO / Phelps) (FAdV-1).